A 385-amino-acid chain; its full sequence is Non-structural maintenance of chromosomes element 4 homolog A (385 aa).

The tract at residues 1-69 (MSGDSSGRGP…PSDSGDEMMD (69 aa)) is disordered. Composition is skewed to basic and acidic residues over residues 10–21 (PEGRGRGRDPHR) and 42–55 (SARE…RPSL). The span at 56-68 (EDTEPSDSGDEMM) shows a compositional bias: acidic residues. Thr345 is subject to Phosphothreonine. Residue Ser377 is modified to Phosphoserine.

Belongs to the NSE4 family. Component of the SMC5-SMC6 complex which consists at least of SMC5, SMC6, NSMCE2, NSMCE1, NSMCE4A or EID3 and NSMCE3. NSMCE1, NSMCE4A or EID3 and NSMCE3 probably form a subcomplex that bridges the head domains of the SMC5:SMC6 heterodimer. Interacts with NSMCE3.

It is found in the nucleus. Its subcellular location is the chromosome. It localises to the telomere. Its function is as follows. Component of the SMC5-SMC6 complex, a complex involved in DNA double-strand breaks by homologous recombination. The complex may promote sister chromatid homologous recombination by recruiting the SMC1-SMC3 cohesin complex to double-strand breaks. The complex is required for telomere maintenance via recombination in ALT (alternative lengthening of telomeres) cell lines and mediates sumoylation of shelterin complex (telosome) components which is proposed to lead to shelterin complex disassembly in ALT-associated PML bodies (APBs). Is involved in positive regulation of response to DNA damage stimulus. The protein is Non-structural maintenance of chromosomes element 4 homolog A (NSMCE4A) of Homo sapiens (Human).